A 577-amino-acid polypeptide reads, in one-letter code: Pentatricopeptide repeat-containing protein At1g06143 (577 aa).

PPR repeat units follow at residues 59 to 89 (DCRLMNQFITACTSFKRLDLAVSTMTQMQEP), 90 to 124 (NVFVYNALFKGFVTCSHPIRSLELYVRMLRDSVSP), 125 to 155 (SSYTYSSLVKASSFASRFGESLQAHIWKFGF), 158 to 192 (HVKIQTTLIDFYSATGRIREARKVFDEMPERDDIA), 193 to 219 (WTTMVSAYRRVLDMDSANSLANQMSEK), 220 to 250 (NEATSNCLINGYMGLGNLEQAESLFNQMPVK), 251 to 285 (DIISWTTMIKGYSQNKRYREAIAVFYKMMEEGIIP), 286 to 320 (DEVTMSTVISACAHLGVLEIGKEVHMYTLQNGFVL), 321 to 351 (DVYIGSALVDMYSKCGSLERALLVFFNLPKK), 352 to 386 (NLFCWNSIIEGLAAHGFAQEALKMFAKMEMESVKP), 387 to 417 (NAVTFVSVFTACTHAGLVDEGRRIYRSMIDD), and 423 to 453 (NVEHYGGMVHLFSKAGLIYEALELIGNMEFE). Residues 458–534 (IWGALLDGCR…CPGTSSIRID (77 aa)) form a type E motif region. The type E(+) motif stretch occupies residues 535 to 565 (KRDHLFAAADKSHSASDEVCLLLDEIYDQMG).

This sequence belongs to the PPR family. PCMP-E subfamily.

In Arabidopsis thaliana (Mouse-ear cress), this protein is Pentatricopeptide repeat-containing protein At1g06143 (EMB1444).